Here is a 467-residue protein sequence, read N- to C-terminus: Putative pentatricopeptide repeat-containing protein At1g10330 (467 aa).

PPR repeat units lie at residues threonine 50 to proline 84, asparagine 85 to tryptophan 119, aspartate 120 to proline 150, cysteine 151 to threonine 181, aspartate 182 to valine 216, asparagine 220 to leucine 256, threonine 257 to lysine 287, lysine 288 to proline 322, asparagine 323 to proline 358, and threonine 359 to glutamate 389. A type E motif; degenerate region spans residues valine 394 to threonine 467.

The protein belongs to the PPR family. PCMP-E subfamily.

The chain is Putative pentatricopeptide repeat-containing protein At1g10330 (PCMP-E71) from Arabidopsis thaliana (Mouse-ear cress).